A 351-amino-acid chain; its full sequence is Dihydroorotate dehydrogenase (quinone) (351 aa).

Residues 67–71 (AGFDK) and T91 contribute to the FMN site. K71 lines the substrate pocket. Substrate is bound at residue 116–120 (NAMGF). 2 residues coordinate FMN: N145 and N178. N178 contacts substrate. Catalysis depends on S181, which acts as the Nucleophile. N183 is a substrate binding site. Residues K214 and T242 each contribute to the FMN site. 243-244 (NT) serves as a coordination point for substrate. FMN contacts are provided by residues G262, G291, and 312-313 (YS).

Belongs to the dihydroorotate dehydrogenase family. Type 2 subfamily. Monomer. FMN is required as a cofactor.

It localises to the cell membrane. The enzyme catalyses (S)-dihydroorotate + a quinone = orotate + a quinol. The protein operates within pyrimidine metabolism; UMP biosynthesis via de novo pathway; orotate from (S)-dihydroorotate (quinone route): step 1/1. Functionally, catalyzes the conversion of dihydroorotate to orotate with quinone as electron acceptor. In Helicobacter pylori (strain ATCC 700392 / 26695) (Campylobacter pylori), this protein is Dihydroorotate dehydrogenase (quinone) (pyrD).